The sequence spans 396 residues: 1-deoxy-D-xylulose 5-phosphate reductoisomerase (396 aa).

Positions 13, 14, 15, 16, and 127 each coordinate NADPH. Lysine 128 contributes to the 1-deoxy-D-xylulose 5-phosphate binding site. Residue glutamate 129 participates in NADPH binding. Aspartate 153 contacts Mn(2+). Positions 154, 155, 184, and 207 each coordinate 1-deoxy-D-xylulose 5-phosphate. Glutamate 155 lines the Mn(2+) pocket. NADPH is bound at residue glycine 213. 1-deoxy-D-xylulose 5-phosphate contacts are provided by serine 220, asparagine 225, lysine 226, and glutamate 229. Glutamate 229 provides a ligand contact to Mn(2+).

This sequence belongs to the DXR family. Mg(2+) is required as a cofactor. The cofactor is Mn(2+).

The catalysed reaction is 2-C-methyl-D-erythritol 4-phosphate + NADP(+) = 1-deoxy-D-xylulose 5-phosphate + NADPH + H(+). The protein operates within isoprenoid biosynthesis; isopentenyl diphosphate biosynthesis via DXP pathway; isopentenyl diphosphate from 1-deoxy-D-xylulose 5-phosphate: step 1/6. Catalyzes the NADPH-dependent rearrangement and reduction of 1-deoxy-D-xylulose-5-phosphate (DXP) to 2-C-methyl-D-erythritol 4-phosphate (MEP). This Pseudomonas fluorescens (strain SBW25) protein is 1-deoxy-D-xylulose 5-phosphate reductoisomerase.